A 335-amino-acid chain; its full sequence is Vitamin B12 import system permease protein BtuC (335 aa).

The next 8 helical transmembrane spans lie at 25-45 (LVVM…VWIW), 67-87 (MAVI…QALF), 94-113 (PGLL…AVLL), 117-139 (LLPI…SILL), 153-173 (LLVG…AVYF), 243-263 (VLAI…ISFI), 281-301 (RLLA…DVVA), and 309-329 (ELPI…WLLI).

It belongs to the binding-protein-dependent transport system permease family. FecCD subfamily. As to quaternary structure, the complex is composed of two ATP-binding proteins (BtuD), two transmembrane proteins (BtuC) and a solute-binding protein (BtuF).

Its subcellular location is the cell inner membrane. In terms of biological role, part of the ABC transporter complex BtuCDF involved in vitamin B12 import. Involved in the translocation of the substrate across the membrane. The sequence is that of Vitamin B12 import system permease protein BtuC from Yersinia pseudotuberculosis serotype O:1b (strain IP 31758).